A 341-amino-acid polypeptide reads, in one-letter code: UDP-3-O-acylglucosamine N-acyltransferase (341 aa).

His-240 (proton acceptor) is an active-site residue.

Belongs to the transferase hexapeptide repeat family. LpxD subfamily. Homotrimer.

The catalysed reaction is a UDP-3-O-[(3R)-3-hydroxyacyl]-alpha-D-glucosamine + a (3R)-hydroxyacyl-[ACP] = a UDP-2-N,3-O-bis[(3R)-3-hydroxyacyl]-alpha-D-glucosamine + holo-[ACP] + H(+). The protein operates within bacterial outer membrane biogenesis; LPS lipid A biosynthesis. In terms of biological role, catalyzes the N-acylation of UDP-3-O-acylglucosamine using 3-hydroxyacyl-ACP as the acyl donor. Is involved in the biosynthesis of lipid A, a phosphorylated glycolipid that anchors the lipopolysaccharide to the outer membrane of the cell. The polypeptide is UDP-3-O-acylglucosamine N-acyltransferase (Cellvibrio japonicus (strain Ueda107) (Pseudomonas fluorescens subsp. cellulosa)).